The following is a 137-amino-acid chain: Small ribosomal subunit protein uS9 (137 aa).

Basic and acidic residues predominate over residues 105–117 (LKIEGHLSRDPRA). The tract at residues 105 to 137 (LKIEGHLSRDPRAKERRKYGLKKARKAPQFSKR) is disordered. The segment covering 118-137 (KERRKYGLKKARKAPQFSKR) has biased composition (basic residues).

The protein belongs to the universal ribosomal protein uS9 family.

In Prochlorococcus marinus (strain MIT 9211), this protein is Small ribosomal subunit protein uS9.